Consider the following 392-residue polypeptide: GTPase Obg (392 aa).

The Obg domain occupies 1-159 (MKFIDEALIR…RDLQLELMLL (159 aa)). Residues 160–333 (ADVGMLGLPN…LCRDIMDFIE (174 aa)) enclose the OBG-type G domain. GTP-binding positions include 166–173 (GLPNAGKS), 191–195 (FTTLV), 213–216 (DIPG), 283–286 (NKID), and 314–316 (SAA). Residues Ser-173 and Thr-193 each coordinate Mg(2+). The segment at 362–392 (EQVFTEDDQEGDDWDDWSEDDEEGVEIIYKP) is disordered. Over residues 365 to 386 (FTEDDQEGDDWDDWSEDDEEGV) the composition is skewed to acidic residues.

The protein belongs to the TRAFAC class OBG-HflX-like GTPase superfamily. OBG GTPase family. As to quaternary structure, monomer. The cofactor is Mg(2+).

The protein localises to the cytoplasm. Its function is as follows. An essential GTPase which binds GTP, GDP and possibly (p)ppGpp with moderate affinity, with high nucleotide exchange rates and a fairly low GTP hydrolysis rate. Plays a role in control of the cell cycle, stress response, ribosome biogenesis and in those bacteria that undergo differentiation, in morphogenesis control. In Histophilus somni (strain 129Pt) (Haemophilus somnus), this protein is GTPase Obg.